The chain runs to 97 residues: Sugar transporter SemiSWEET (97 aa).

The PQ-loop domain occupies 4 to 70; sequence IERIGKALEP…IYGIYHKNPT (67 aa). A run of 3 helical transmembrane segments spans residues 15–35, 44–65, and 71–91; these read MLVM…KLYV, LSLT…YGIY, and IWVG…GIIA.

As to quaternary structure, homodimer.

The protein localises to the cell membrane. Functionally, the homodimer mediates transmembrane sugar transport down a concentration gradient. Transport is probably effected by rocking-type movements, where a cargo-binding cavity opens first on one and then on the other side of the membrane. The protein is Sugar transporter SemiSWEET of Vibrio sp. (strain N418).